We begin with the raw amino-acid sequence, 149 residues long: Transcriptional regulator MraZ (149 aa).

2 SpoVT-AbrB domains span residues 7-54 (KYVN…GISH) and 83-126 (ALQL…QPQN).

The protein belongs to the MraZ family. Forms oligomers.

The protein resides in the cytoplasm. It is found in the nucleoid. This is Transcriptional regulator MraZ from Rickettsia canadensis (strain McKiel).